A 153-amino-acid chain; its full sequence is Aspartate carbamoyltransferase regulatory chain (153 aa).

Positions 109, 114, 138, and 141 each coordinate Zn(2+).

The protein belongs to the PyrI family. In terms of assembly, contains catalytic and regulatory chains. Requires Zn(2+) as cofactor.

Its function is as follows. Involved in allosteric regulation of aspartate carbamoyltransferase. The polypeptide is Aspartate carbamoyltransferase regulatory chain (Cenarchaeum symbiosum (strain A)).